The sequence spans 370 residues: Probable trehalose-phosphate phosphatase J (370 aa).

It belongs to the trehalose phosphatase family. The cofactor is a divalent metal cation.

The catalysed reaction is alpha,alpha-trehalose 6-phosphate + H2O = alpha,alpha-trehalose + phosphate. It functions in the pathway glycan biosynthesis; trehalose biosynthesis. Its function is as follows. Removes the phosphate from trehalose 6-phosphate to produce free trehalose. Trehalose accumulation in plant may improve abiotic stress tolerance. This chain is Probable trehalose-phosphate phosphatase J (TPPJ), found in Arabidopsis thaliana (Mouse-ear cress).